The primary structure comprises 718 residues: Probable glycerol-3-phosphate acyltransferase, mitochondrial (718 aa).

Residues 167–172 (HRSHLD) carry the HXXXXD motif motif. Residues 409–425 (MMCSISPVAVVSCLLLA) form a helical membrane-spanning segment.

This sequence belongs to the GPAT/DAPAT family.

The protein localises to the mitochondrion membrane. It carries out the reaction sn-glycerol 3-phosphate + an acyl-CoA = a 1-acyl-sn-glycero-3-phosphate + CoA. It functions in the pathway phospholipid metabolism; CDP-diacylglycerol biosynthesis; CDP-diacylglycerol from sn-glycerol 3-phosphate: step 1/3. In Caenorhabditis elegans, this protein is Probable glycerol-3-phosphate acyltransferase, mitochondrial (acl-6).